We begin with the raw amino-acid sequence, 355 residues long: uncharacterized protein (355 aa).

Belongs to the serpin family. Poxviruses subfamily.

This is an uncharacterized protein from Vertebrata (FPV).